The following is a 237-amino-acid chain: Ribose-5-phosphate isomerase A (237 aa).

Residues 29 to 32 (SGST), 86 to 89 (DGAD), and 99 to 102 (KGGG) contribute to the substrate site. Catalysis depends on glutamate 108, which acts as the Proton acceptor. Lysine 126 serves as a coordination point for substrate.

This sequence belongs to the ribose 5-phosphate isomerase family. In terms of assembly, homodimer.

The catalysed reaction is aldehydo-D-ribose 5-phosphate = D-ribulose 5-phosphate. It functions in the pathway carbohydrate degradation; pentose phosphate pathway; D-ribose 5-phosphate from D-ribulose 5-phosphate (non-oxidative stage): step 1/1. Catalyzes the reversible conversion of ribose-5-phosphate to ribulose 5-phosphate. This is Ribose-5-phosphate isomerase A from Prochlorococcus marinus (strain MIT 9312).